Consider the following 310-residue polypeptide: Carbamate kinase 1 (310 aa).

It belongs to the carbamate kinase family.

The protein localises to the cytoplasm. The enzyme catalyses hydrogencarbonate + NH4(+) + ATP = carbamoyl phosphate + ADP + H2O + H(+). The protein operates within metabolic intermediate metabolism; carbamoyl phosphate degradation; CO(2) and NH(3) from carbamoyl phosphate: step 1/1. In Staphylococcus epidermidis (strain ATCC 12228 / FDA PCI 1200), this protein is Carbamate kinase 1 (arcC1).